The following is a 574-amino-acid chain: Isocitrate dehydrogenase kinase/phosphatase (574 aa).

Residues 315-321 (APGIRGM) and K336 contribute to the ATP site. D371 is an active-site residue.

Belongs to the AceK family.

The protein resides in the cytoplasm. The catalysed reaction is L-seryl-[isocitrate dehydrogenase] + ATP = O-phospho-L-seryl-[isocitrate dehydrogenase] + ADP + H(+). Its function is as follows. Bifunctional enzyme which can phosphorylate or dephosphorylate isocitrate dehydrogenase (IDH) on a specific serine residue. This is a regulatory mechanism which enables bacteria to bypass the Krebs cycle via the glyoxylate shunt in response to the source of carbon. When bacteria are grown on glucose, IDH is fully active and unphosphorylated, but when grown on acetate or ethanol, the activity of IDH declines drastically concomitant with its phosphorylation. This Escherichia coli O81 (strain ED1a) protein is Isocitrate dehydrogenase kinase/phosphatase.